Reading from the N-terminus, the 318-residue chain is Ankyrin repeat domain-containing protein 1 (318 aa).

Residues 37–77 (ALEKQEDLKTTSKSLIELEEEKQIKEKQLKSELLKKKLEER) are a coiled coil. 6 ANK repeats span residues 118–147 (VDQTTFFKAALDNKMPVIEKYLADGGDPNT), 151–180 (YKRTALHRACSEGHTDMVEKLIEAGANIEF), 184–213 (LESTALHWTCRGGSVETLKLLLNKGAAINA), 217–246 (LLSTPLHVAVRTGHYECAEHLIACEADLHA), 250–279 (EGDTPMHDGVRLNRYKMMRLLILYGVDLNI), and 283–314 (AGKTPMELVMQWQNGAKEIFNGLQSKSYKNSH).

The protein resides in the nucleus. May act as a nuclear transcription factor that negatively regulates the expression of cardiac genes. In Xenopus tropicalis (Western clawed frog), this protein is Ankyrin repeat domain-containing protein 1 (ankrd1).